Reading from the N-terminus, the 270-residue chain is ATP synthase subunit a (270 aa).

A run of 6 helical transmembrane segments spans residues 27 to 47, 90 to 110, 147 to 166, 182 to 202, 211 to 231, and 238 to 258; these read FWTFHVDTLAWSVVLGLVFIL, IAPLALTIFVWVLLMNLMDLI, VNMTFALSLGVFALMIFYSV, PFNTPWLYWFNFILELVSLIA, LFGNLYAGELIFILIAGTLGV, and FLWAAFHLLVIPLQAFIFMML.

This sequence belongs to the ATPase A chain family. F-type ATPases have 2 components, CF(1) - the catalytic core - and CF(0) - the membrane proton channel. CF(1) has five subunits: alpha(3), beta(3), gamma(1), delta(1), epsilon(1). CF(0) has three main subunits: a(1), b(2) and c(9-12). The alpha and beta chains form an alternating ring which encloses part of the gamma chain. CF(1) is attached to CF(0) by a central stalk formed by the gamma and epsilon chains, while a peripheral stalk is formed by the delta and b chains.

The protein resides in the cell inner membrane. Functionally, key component of the proton channel; it plays a direct role in the translocation of protons across the membrane. This chain is ATP synthase subunit a, found in Pseudoalteromonas atlantica (strain T6c / ATCC BAA-1087).